The sequence spans 355 residues: MGKCSYRFISLQTLTPNSLLDHSPNPTIWAKPLQIGSLTLHSRVLQSPLSGVTDLVFRRLVRRYAPQAMLYTEMVSATEIHHLRTLPQVMEIDPRENPISIQLFDCRPDFMAEAAQKAVAQGAQSVDINMGCPVNKITKKGGGSSLLRQPAVAEAIVKTVVAAVDVPVTVKTRLGWDDGEINIVEFAQRLQDAGAQMLTLHGRTRAQGYNGRARWQWIAKVKQALTIPVIANGDIFSVEAAIACLEETGADGVMCSRGSLGYPFLVGEIEHFFKTGEKRKAPTVAEKLTCAQEHLQMLWEYKGQRGLFQARKHLAWYCKDFPGAAALREQLFQINSVQEGKDLLDQAISTAKLCL.

FMN-binding positions include 48-50 and Gln-102; that span reads PLS. Catalysis depends on Cys-132, which acts as the Proton donor. FMN contacts are provided by residues Lys-171, 232-234, and 256-257; these read NGD and SR.

The protein belongs to the Dus family. FMN serves as cofactor.

It catalyses the reaction a 5,6-dihydrouridine in tRNA + NAD(+) = a uridine in tRNA + NADH + H(+). The enzyme catalyses a 5,6-dihydrouridine in tRNA + NADP(+) = a uridine in tRNA + NADPH + H(+). Its function is as follows. Catalyzes the synthesis of 5,6-dihydrouridine (D), a modified base found in the D-loop of most tRNAs, via the reduction of the C5-C6 double bond in target uridines. This chain is Probable tRNA-dihydrouridine synthase 1 (dus1), found in Synechocystis sp. (strain ATCC 27184 / PCC 6803 / Kazusa).